A 467-amino-acid polypeptide reads, in one-letter code: Glutamate--tRNA ligase (467 aa).

The 'HIGH' region signature appears at P9–G19. The 'KMSKS' region signature appears at K237–R241. K240 serves as a coordination point for ATP.

It belongs to the class-I aminoacyl-tRNA synthetase family. Glutamate--tRNA ligase type 1 subfamily. As to quaternary structure, monomer.

The protein localises to the cytoplasm. It catalyses the reaction tRNA(Glu) + L-glutamate + ATP = L-glutamyl-tRNA(Glu) + AMP + diphosphate. Functionally, catalyzes the attachment of glutamate to tRNA(Glu) in a two-step reaction: glutamate is first activated by ATP to form Glu-AMP and then transferred to the acceptor end of tRNA(Glu). The polypeptide is Glutamate--tRNA ligase (Xanthomonas oryzae pv. oryzae (strain MAFF 311018)).